Here is a 1093-residue protein sequence, read N- to C-terminus: Regulator of nonsense transcripts 1 homolog (1093 aa).

The tract at residues Tyr-42–Val-79 is disordered. Positions Asp-61–Ser-75 are enriched in acidic residues. The 158-residue stretch at Glu-95 to Ala-252 folds into the Upf1 CH-rich domain. Residues Cys-103, Cys-106, Cys-117, Cys-120, Cys-125, His-135, His-139, His-145, Cys-163, Cys-166, Cys-189, and Cys-193 each coordinate Zn(2+). Residues Cys-103 to His-135 form a C3H region. A CC/SHH/C region spans residues Cys-117–His-145. A C4 region spans residues Cys-163 to Cys-193. ATP-binding positions include Gln-460, Gly-480–Thr-484, Gln-650, Tyr-687, and Glu-818.

This sequence belongs to the DNA2/NAM7 helicase family.

The protein resides in the cytoplasm. The catalysed reaction is ATP + H2O = ADP + phosphate + H(+). In terms of biological role, RNA-dependent helicase required for nonsense-mediated decay (NMD) of aberrant mRNAs containing premature stop codons and modulates the expression level of normal mRNAs. Also capable of unwinding double-stranded DNA and translocating on single-stranded DNA. This Neurospora crassa (strain ATCC 24698 / 74-OR23-1A / CBS 708.71 / DSM 1257 / FGSC 987) protein is Regulator of nonsense transcripts 1 homolog.